A 494-amino-acid polypeptide reads, in one-letter code: NADH-quinone oxidoreductase subunit N (494 aa).

Helical transmembrane passes span 9–29 (VIPEIFLAAATCAILLIDLFL), 36–56 (LTYVLSLATLVVCAVLSLSDF), 73–93 (PMSNLLKFCTYIAVGLTLVYS), 107–127 (LGGEFYILSLFTVLGQMVMMS), 131–151 (FLIIYLGLEIMSLSLYALVAF), 166–186 (FVLGALASGFLLYGISMLYGA), 209–229 (LIFGLVFVVAGLAFKLGAVPF), 241–261 (PTAVTLMLGGAPKLAAFAITI), 278–298 (MLTILSVLSMAIGNITAIMQT), 304–324 (LAYSTISQVGFILLGLLSGVV), 339–359 (MFYVITYVLTTLGMFGVIMLL), 382–402 (FAFVTLLLMFSLAGVPPVVGF), 416–436 (GQIWLAVVAVLFSLIGAFYYL), and 469–489 (ALLALGLVPGPLMTACAAAII).

Belongs to the complex I subunit 2 family. As to quaternary structure, NDH-1 is composed of 14 different subunits. Subunits NuoA, H, J, K, L, M, N constitute the membrane sector of the complex.

It is found in the cell inner membrane. It catalyses the reaction a quinone + NADH + 5 H(+)(in) = a quinol + NAD(+) + 4 H(+)(out). Its function is as follows. NDH-1 shuttles electrons from NADH, via FMN and iron-sulfur (Fe-S) centers, to quinones in the respiratory chain. The immediate electron acceptor for the enzyme in this species is believed to be ubiquinone. Couples the redox reaction to proton translocation (for every two electrons transferred, four hydrogen ions are translocated across the cytoplasmic membrane), and thus conserves the redox energy in a proton gradient. This chain is NADH-quinone oxidoreductase subunit N, found in Herminiimonas arsenicoxydans.